A 236-amino-acid polypeptide reads, in one-letter code: Small ribosomal subunit protein uS3 (236 aa).

The 69-residue stretch at 39-107 (IRLYVLEELK…ETSLNIVEIH (69 aa)) folds into the KH type-2 domain.

The protein belongs to the universal ribosomal protein uS3 family. In terms of assembly, part of the 30S ribosomal subunit. Forms a tight complex with proteins S10 and S14.

Binds the lower part of the 30S subunit head. Binds mRNA in the 70S ribosome, positioning it for translation. This is Small ribosomal subunit protein uS3 from Bartonella quintana (strain Toulouse) (Rochalimaea quintana).